The following is a 198-amino-acid chain: Dual specificity protein phosphatase 13B (198 aa).

The Tyrosine-protein phosphatase domain occupies 45–193; it reads HIDEVWPSLF…LQVLDNRLGR (149 aa). The active-site Phosphocysteine intermediate is the Cys-138.

The protein belongs to the protein-tyrosine phosphatase family. Non-receptor class dual specificity subfamily. As to expression, highly expressed in the testis (at protein level). Also found in the skeletal muscle.

The enzyme catalyses O-phospho-L-tyrosyl-[protein] + H2O = L-tyrosyl-[protein] + phosphate. It carries out the reaction O-phospho-L-seryl-[protein] + H2O = L-seryl-[protein] + phosphate. The catalysed reaction is O-phospho-L-threonyl-[protein] + H2O = L-threonyl-[protein] + phosphate. Its function is as follows. Dual specificity phosphatase that dephosphorylates MAPK8/JNK and MAPK14/p38, but not MAPK1/ERK2, in vitro. Exhibits intrinsic phosphatase activity towards both phospho-seryl/threonyl and -tyrosyl residues, with similar specific activities in vitro. The polypeptide is Dual specificity protein phosphatase 13B (Homo sapiens (Human)).